Here is a 435-residue protein sequence, read N- to C-terminus: Kynurenine--oxoglutarate transaminase (435 aa).

G46 and N198 together coordinate substrate. At K262 the chain carries N6-(pyridoxal phosphate)lysine. R413 serves as a coordination point for substrate.

It belongs to the class-I pyridoxal-phosphate-dependent aminotransferase family. Homodimer. Pyridoxal 5'-phosphate is required as a cofactor.

The protein resides in the cytoplasm. It catalyses the reaction L-kynurenine + 2-oxoglutarate = kynurenate + L-glutamate + H2O. The enzyme catalyses 3-phenylpyruvate + L-glutamine = 2-oxoglutaramate + L-phenylalanine. The catalysed reaction is an S-substituted L-cysteine + H2O = a thiol + pyruvate + NH4(+). The protein operates within amino-acid degradation; L-kynurenine degradation; kynurenate from L-kynurenine: step 1/2. Catalyzes the irreversible transamination of the L-tryptophan metabolite L-kynurenine to form kynurenic acid (KA). Metabolizes the cysteine conjugates of certain halogenated alkenes and alkanes to form reactive metabolites. Catalyzes the beta-elimination of S-conjugates and Se-conjugates of L-(seleno)cysteine, resulting in the cleavage of the C-S or C-Se bond. This is Kynurenine--oxoglutarate transaminase (ccbl) from Dictyostelium discoideum (Social amoeba).